Consider the following 199-residue polypeptide: Recombination protein RecR (199 aa).

The C4-type zinc finger occupies 58–73 (CKTCGNIDTQSPCTVC). Residues 81–176 (AMIVVVADVA…KVTRLAHGVP (96 aa)) form the Toprim domain.

Belongs to the RecR family.

Functionally, may play a role in DNA repair. It seems to be involved in an RecBC-independent recombinational process of DNA repair. It may act with RecF and RecO. The protein is Recombination protein RecR of Bradyrhizobium sp. (strain BTAi1 / ATCC BAA-1182).